The following is a 319-amino-acid chain: Methionyl-tRNA formyltransferase (319 aa).

114 to 117 (SLLP) serves as a coordination point for (6S)-5,6,7,8-tetrahydrofolate.

This sequence belongs to the Fmt family.

The catalysed reaction is L-methionyl-tRNA(fMet) + (6R)-10-formyltetrahydrofolate = N-formyl-L-methionyl-tRNA(fMet) + (6S)-5,6,7,8-tetrahydrofolate + H(+). Functionally, attaches a formyl group to the free amino group of methionyl-tRNA(fMet). The formyl group appears to play a dual role in the initiator identity of N-formylmethionyl-tRNA by promoting its recognition by IF2 and preventing the misappropriation of this tRNA by the elongation apparatus. The protein is Methionyl-tRNA formyltransferase of Acinetobacter baylyi (strain ATCC 33305 / BD413 / ADP1).